The sequence spans 102 residues: Small ribosomal subunit protein uS10 (102 aa).

This sequence belongs to the universal ribosomal protein uS10 family. In terms of assembly, part of the 30S ribosomal subunit.

Involved in the binding of tRNA to the ribosomes. The polypeptide is Small ribosomal subunit protein uS10 (Methanococcus maripaludis (strain C6 / ATCC BAA-1332)).